A 284-amino-acid chain; its full sequence is 4-diphosphocytidyl-2-C-methyl-D-erythritol kinase (284 aa).

The active site involves Lys14. Residue 98–108 (PMGGGLGGGSS) coordinates ATP. Residue Asp140 is part of the active site.

Belongs to the GHMP kinase family. IspE subfamily.

It catalyses the reaction 4-CDP-2-C-methyl-D-erythritol + ATP = 4-CDP-2-C-methyl-D-erythritol 2-phosphate + ADP + H(+). Its pathway is isoprenoid biosynthesis; isopentenyl diphosphate biosynthesis via DXP pathway; isopentenyl diphosphate from 1-deoxy-D-xylulose 5-phosphate: step 3/6. Catalyzes the phosphorylation of the position 2 hydroxy group of 4-diphosphocytidyl-2C-methyl-D-erythritol. This is 4-diphosphocytidyl-2-C-methyl-D-erythritol kinase from Shewanella oneidensis (strain ATCC 700550 / JCM 31522 / CIP 106686 / LMG 19005 / NCIMB 14063 / MR-1).